The chain runs to 238 residues: uncharacterized protein (238 aa).

One can recognise a Response regulatory domain in the interval R3–S116. D54 bears the 4-aspartylphosphate mark. Residues I136 to I237 form the HTH LytTR-type domain.

This is an uncharacterized protein from Yersinia pestis.